Reading from the N-terminus, the 389-residue chain is ATP phosphoribosyltransferase regulatory subunit (389 aa).

This sequence belongs to the class-II aminoacyl-tRNA synthetase family. HisZ subfamily. As to quaternary structure, heteromultimer composed of HisG and HisZ subunits.

The protein localises to the cytoplasm. It functions in the pathway amino-acid biosynthesis; L-histidine biosynthesis; L-histidine from 5-phospho-alpha-D-ribose 1-diphosphate: step 1/9. Functionally, required for the first step of histidine biosynthesis. May allow the feedback regulation of ATP phosphoribosyltransferase activity by histidine. The protein is ATP phosphoribosyltransferase regulatory subunit of Moorella thermoacetica (strain ATCC 39073 / JCM 9320).